Reading from the N-terminus, the 75-residue chain is uncharacterized protein (75 aa).

An N-terminal signal peptide occupies residues 1–18; it reads MRKYLSARSMCCSFFSCA.

This is an uncharacterized protein from Treponema pallidum (strain Nichols).